Here is a 251-residue protein sequence, read N- to C-terminus: 2,3-bisphosphoglycerate-dependent phosphoglycerate mutase (251 aa).

Substrate is bound by residues 8–15 (RHGESLWN), 21–22 (TG), arginine 60, 87–90 (ERHY), lysine 98, 114–115 (RR), and 183–184 (GN). Histidine 9 functions as the Tele-phosphohistidine intermediate in the catalytic mechanism. The active-site Proton donor/acceptor is the glutamate 87.

Belongs to the phosphoglycerate mutase family. BPG-dependent PGAM subfamily.

It catalyses the reaction (2R)-2-phosphoglycerate = (2R)-3-phosphoglycerate. Its pathway is carbohydrate degradation; glycolysis; pyruvate from D-glyceraldehyde 3-phosphate: step 3/5. Catalyzes the interconversion of 2-phosphoglycerate and 3-phosphoglycerate. This chain is 2,3-bisphosphoglycerate-dependent phosphoglycerate mutase, found in Thermoanaerobacter pseudethanolicus (strain ATCC 33223 / 39E) (Clostridium thermohydrosulfuricum).